Reading from the N-terminus, the 144-residue chain is Small polypeptide DEVIL 18 (144 aa).

Residues 30-58 (SFSTKTSSSSSKPVFTRSFSTKPTSYSSS) are compositionally biased toward low complexity. Positions 30–89 (SFSTKTSSSSSKPVFTRSFSTKPTSYSSSEPIFRRSFSAKPTSSKSPFLSRSGSTKCPVD) are disordered. A helical transmembrane segment spans residues 42–58 (PVFTRSFSTKPTSYSSS). The span at 68–84 (AKPTSSKSPFLSRSGST) shows a compositional bias: polar residues. Positions 108–139 (SVTRKCRNMAKEHKSRFYIMKRCVLMLVCWHK) are required for DVL/RTFL small polypeptide activity.

This sequence belongs to the DVL/RTFL small polypeptides family.

It localises to the cell membrane. Small polypeptide acting as a regulatory molecule which coordinates cellular responses required for differentiation, growth and development, probably by restricting polar cell proliferation in lateral organs and coordinating socket cell recruitment and differentiation at trichome sites. This is Small polypeptide DEVIL 18 from Arabidopsis thaliana (Mouse-ear cress).